The following is a 569-amino-acid chain: Arginine--tRNA ligase (569 aa).

Positions 123 to 133 (ANPNGPLHVGH) match the 'HIGH' region motif.

Belongs to the class-I aminoacyl-tRNA synthetase family.

It is found in the cytoplasm. It catalyses the reaction tRNA(Arg) + L-arginine + ATP = L-arginyl-tRNA(Arg) + AMP + diphosphate. The polypeptide is Arginine--tRNA ligase (Methanosarcina barkeri (strain Fusaro / DSM 804)).